The sequence spans 286 residues: Bifunctional protein FolD (286 aa).

NADP(+) contacts are provided by residues 165–167 (GRS) and Ser-190.

This sequence belongs to the tetrahydrofolate dehydrogenase/cyclohydrolase family. As to quaternary structure, homodimer.

It catalyses the reaction (6R)-5,10-methylene-5,6,7,8-tetrahydrofolate + NADP(+) = (6R)-5,10-methenyltetrahydrofolate + NADPH. The catalysed reaction is (6R)-5,10-methenyltetrahydrofolate + H2O = (6R)-10-formyltetrahydrofolate + H(+). The protein operates within one-carbon metabolism; tetrahydrofolate interconversion. Catalyzes the oxidation of 5,10-methylenetetrahydrofolate to 5,10-methenyltetrahydrofolate and then the hydrolysis of 5,10-methenyltetrahydrofolate to 10-formyltetrahydrofolate. The chain is Bifunctional protein FolD from Burkholderia cenocepacia (strain ATCC BAA-245 / DSM 16553 / LMG 16656 / NCTC 13227 / J2315 / CF5610) (Burkholderia cepacia (strain J2315)).